Here is a 320-residue protein sequence, read N- to C-terminus: Cytochrome f (320 aa).

Residues 1–35 (MQNRNTFSWIKEQMTRSISVSIMIYVITRTAISNA) form the signal peptide. The heme site is built by Tyr36, Cys56, Cys59, and His60. Residues 286–306 (VQGLLFFLASVILAQIFLVLK) traverse the membrane as a helical segment.

The protein belongs to the cytochrome f family. As to quaternary structure, the 4 large subunits of the cytochrome b6-f complex are cytochrome b6, subunit IV (17 kDa polypeptide, petD), cytochrome f and the Rieske protein, while the 4 small subunits are PetG, PetL, PetM and PetN. The complex functions as a dimer. Heme serves as cofactor.

It localises to the plastid. The protein localises to the chloroplast thylakoid membrane. Its function is as follows. Component of the cytochrome b6-f complex, which mediates electron transfer between photosystem II (PSII) and photosystem I (PSI), cyclic electron flow around PSI, and state transitions. In Platanus occidentalis (Sycamore), this protein is Cytochrome f.